A 460-amino-acid polypeptide reads, in one-letter code: tRNA modification GTPase MnmE (460 aa).

3 residues coordinate (6S)-5-formyl-5,6,7,8-tetrahydrofolate: Arg22, Glu83, and Lys122. Positions Gly219–Gln381 constitute a TrmE-type G domain. Residue Asn229 coordinates K(+). GTP is bound by residues Asn229–Ser234, Ser248–Thr254, and Asp273–Gly276. Ser233 lines the Mg(2+) pocket. Ser248, Ile250, and Thr253 together coordinate K(+). Thr254 is a binding site for Mg(2+). Residue Lys460 participates in (6S)-5-formyl-5,6,7,8-tetrahydrofolate binding.

Belongs to the TRAFAC class TrmE-Era-EngA-EngB-Septin-like GTPase superfamily. TrmE GTPase family. Homodimer. Heterotetramer of two MnmE and two MnmG subunits. K(+) is required as a cofactor.

The protein localises to the cytoplasm. Its function is as follows. Exhibits a very high intrinsic GTPase hydrolysis rate. Involved in the addition of a carboxymethylaminomethyl (cmnm) group at the wobble position (U34) of certain tRNAs, forming tRNA-cmnm(5)s(2)U34. The polypeptide is tRNA modification GTPase MnmE (Aster yellows witches'-broom phytoplasma (strain AYWB)).